Consider the following 398-residue polypeptide: Tyrosine--tRNA ligase (398 aa).

The short motif at 48-57 is the 'HIGH' region element; it reads PTGADIHLGH. A 'KMSKS' region motif is present at residues 235-239; sequence KMSKS. Residue Lys238 coordinates ATP. Positions 334–398 constitute an S4 RNA-binding domain; it reads VKLAYLLGAT…GKNKFVRLVL (65 aa).

It belongs to the class-I aminoacyl-tRNA synthetase family. TyrS type 2 subfamily. As to quaternary structure, homodimer.

The protein resides in the cytoplasm. The catalysed reaction is tRNA(Tyr) + L-tyrosine + ATP = L-tyrosyl-tRNA(Tyr) + AMP + diphosphate + H(+). Catalyzes the attachment of tyrosine to tRNA(Tyr) in a two-step reaction: tyrosine is first activated by ATP to form Tyr-AMP and then transferred to the acceptor end of tRNA(Tyr). The protein is Tyrosine--tRNA ligase of Trichormus variabilis (strain ATCC 29413 / PCC 7937) (Anabaena variabilis).